The primary structure comprises 405 residues: MLIDHLNRQQLEREAQGLQRQRRIAESPCAPRQWVSQDGQPAREMLAFCSNDYLGLANHPALVEALAEGARQFGAGSGASHLISGHSRAHAALEGDLAAWLAPSIPNAAALYFCTGYLANLALLTALGDASATIFADKLNHASLIDGALLAKATMQRYAHRNLTVLASQLESCTTPIKLIVTDAVFSMDGDLADLPALLALAERFDAWLIVDDAHGFGVLGDQGRGSLSHFGLRSERLIYMGTLGKAAGLGGAFVAAHPSIIDWLVQAARPYIYTTAAPPAVAHALRESLRLISSAEGEQRRAHLQQLIIQLRTQLSALIGAHPTLGWRLADSSTAIQPLIVGDNAAALALMAALDAQGLWVPAIRPPTVPVGTARLRITLSATHSAADVQRLVDGLACAARELP.

Position 20 (R20) interacts with substrate. 116–117 (GY) contributes to the pyridoxal 5'-phosphate binding site. H141 is a substrate binding site. S187, H215, and T243 together coordinate pyridoxal 5'-phosphate. K246 carries the post-translational modification N6-(pyridoxal phosphate)lysine. T369 serves as a coordination point for substrate.

Belongs to the class-II pyridoxal-phosphate-dependent aminotransferase family. BioF subfamily. In terms of assembly, homodimer. It depends on pyridoxal 5'-phosphate as a cofactor.

The enzyme catalyses 6-carboxyhexanoyl-[ACP] + L-alanine + H(+) = (8S)-8-amino-7-oxononanoate + holo-[ACP] + CO2. It functions in the pathway cofactor biosynthesis; biotin biosynthesis. In terms of biological role, catalyzes the decarboxylative condensation of pimeloyl-[acyl-carrier protein] and L-alanine to produce 8-amino-7-oxononanoate (AON), [acyl-carrier protein], and carbon dioxide. The polypeptide is 8-amino-7-oxononanoate synthase 2 (Polaromonas sp. (strain JS666 / ATCC BAA-500)).